The primary structure comprises 743 residues: Amylovoran biosynthesis protein AmsF (743 aa).

The first 27 residues, 1–27 (MKRRELIRTAFSTIVATAALSSVSARA), serve as a signal peptide directing secretion.

This sequence to R.meliloti ExoP.

It localises to the periplasm. It participates in glycan metabolism; exopolysaccharide biosynthesis. In terms of biological role, involved in the biosynthesis of amylovoran which functions as a virulence factor. May be involved in the polymerization or late modification of the repeating units. In Erwinia amylovora (Fire blight bacteria), this protein is Amylovoran biosynthesis protein AmsF (amsF).